The chain runs to 209 residues: MGVDDLVNDVMRLKGSRVREIIERRMREFERERSDEELFKELVFCLLTANFSAEGGLRILESLGDGIFTLSEEELAAKLAELGHRYPRKRAEFIVEARKLIPILRDIISSFRDERLLREWLVKNVKGLGYKEASHFLRNIGFKNVSIIDYHILDLLMKYGILEEKPKSLSRARYLMIESILEEISRRTGINLGELDLYLWYIETGKVLK.

Catalysis depends on residues Lys131 and Asp149.

It belongs to the type-2 OGG1 family.

The catalysed reaction is 2'-deoxyribonucleotide-(2'-deoxyribose 5'-phosphate)-2'-deoxyribonucleotide-DNA = a 3'-end 2'-deoxyribonucleotide-(2,3-dehydro-2,3-deoxyribose 5'-phosphate)-DNA + a 5'-end 5'-phospho-2'-deoxyribonucleoside-DNA + H(+). Its function is as follows. Catalyzes the excision of an oxidatively damaged form of guanine (7,8-dihydro-8-oxoguanine = 8-oxoG) from DNA. Also cleaves the DNA backbone at apurinic/apyrimidinic sites (AP sites). This Korarchaeum cryptofilum (strain OPF8) protein is 8-oxoguanine DNA glycosylase/AP lyase.